Reading from the N-terminus, the 97-residue chain is Serine protease inhibitor Kazal-type 14 (97 aa).

Positions 1 to 21 (MAKSFPVFSLLSFILIHLVLS) are cleaved as a signal peptide. The 64-residue stretch at 34-97 (GIIKVKCPYE…RIRFYHDGKC (64 aa)) folds into the Kazal-like domain. 3 cysteine pairs are disulfide-bonded: Cys-40–Cys-79, Cys-57–Cys-76, and Cys-65–Cys-97. An N-linked (GlcNAc...) asparagine glycan is attached at Asn-51.

Its subcellular location is the secreted. In terms of biological role, may be a serine protease inhibitor. The sequence is that of Serine protease inhibitor Kazal-type 14 (SPINK14) from Homo sapiens (Human).